A 339-amino-acid polypeptide reads, in one-letter code: Ornithine carbamoyltransferase, catabolic (339 aa).

Residues 57-60, glutamine 84, arginine 108, and 135-138 each bind carbamoyl phosphate; these read STRT and HPTQ. Residues asparagine 167, aspartate 231, and 235–236 contribute to the L-ornithine site; that span reads SM. Residues 274 to 275 and arginine 319 contribute to the carbamoyl phosphate site; that span reads CL.

This sequence belongs to the aspartate/ornithine carbamoyltransferase superfamily. OTCase family.

Its subcellular location is the cytoplasm. It catalyses the reaction carbamoyl phosphate + L-ornithine = L-citrulline + phosphate + H(+). Its pathway is amino-acid degradation; L-arginine degradation via ADI pathway; carbamoyl phosphate from L-arginine: step 2/2. Reversibly catalyzes the transfer of the carbamoyl group from carbamoyl phosphate (CP) to the N(epsilon) atom of ornithine (ORN) to produce L-citrulline. The sequence is that of Ornithine carbamoyltransferase, catabolic (arcB) from Enterococcus faecalis (strain ATCC 700802 / V583).